A 139-amino-acid chain; its full sequence is MAIERTLSILKPDTVKNNIIGNINSYIEKSGLRIIAQKMMLLTKKQAELFYAIHKDRPFFGGLVEFMTSGPVIVQVLVGENAISKYRQIMGATDPKQADKGTIRGDFADDVNENRVHGSDSLENAHKEIAFFFAECELV.

6 residues coordinate ATP: Lys11, Phe59, Arg87, Thr93, Arg104, and Asn114. The active-site Pros-phosphohistidine intermediate is His117.

Belongs to the NDK family. As to quaternary structure, homotetramer. Mg(2+) serves as cofactor.

The protein localises to the cytoplasm. The catalysed reaction is a 2'-deoxyribonucleoside 5'-diphosphate + ATP = a 2'-deoxyribonucleoside 5'-triphosphate + ADP. It carries out the reaction a ribonucleoside 5'-diphosphate + ATP = a ribonucleoside 5'-triphosphate + ADP. Its function is as follows. Major role in the synthesis of nucleoside triphosphates other than ATP. The ATP gamma phosphate is transferred to the NDP beta phosphate via a ping-pong mechanism, using a phosphorylated active-site intermediate. The chain is Nucleoside diphosphate kinase from Wolbachia sp. subsp. Brugia malayi (strain TRS).